We begin with the raw amino-acid sequence, 97 residues long: Aspartyl/glutamyl-tRNA(Asn/Gln) amidotransferase subunit C (97 aa).

This sequence belongs to the GatC family. As to quaternary structure, heterotrimer of A, B and C subunits.

The enzyme catalyses L-glutamyl-tRNA(Gln) + L-glutamine + ATP + H2O = L-glutaminyl-tRNA(Gln) + L-glutamate + ADP + phosphate + H(+). It catalyses the reaction L-aspartyl-tRNA(Asn) + L-glutamine + ATP + H2O = L-asparaginyl-tRNA(Asn) + L-glutamate + ADP + phosphate + 2 H(+). In terms of biological role, allows the formation of correctly charged Asn-tRNA(Asn) or Gln-tRNA(Gln) through the transamidation of misacylated Asp-tRNA(Asn) or Glu-tRNA(Gln) in organisms which lack either or both of asparaginyl-tRNA or glutaminyl-tRNA synthetases. The reaction takes place in the presence of glutamine and ATP through an activated phospho-Asp-tRNA(Asn) or phospho-Glu-tRNA(Gln). The polypeptide is Aspartyl/glutamyl-tRNA(Asn/Gln) amidotransferase subunit C (Prochlorococcus marinus (strain MIT 9313)).